The sequence spans 304 residues: Rhomboid-like protein 19 (304 aa).

6 helical membrane-spanning segments follow: residues 23–43 (LVVGHLVVQFIPATVPYLALI), 58–78 (GYFELSVYGVVFSTVSLLFMG), 93–113 (FIFVVNFLTYLCVFVTAIALY), 120–140 (VYLYMPFAGFHGVLAGLLVGI), 158–175 (WLPSIMLILSIASSFFTL), and 179–198 (AYLPTLIFGTYMGWLYLRYL). Residues 247-304 (SEDHDYSTSGAPLPGSDSAEASRRRERGARALEERLGTERLVPARNKDELQSDGLDNV) are disordered. Residues 266–284 (EASRRRERGARALEERLGT) are compositionally biased toward basic and acidic residues.

This sequence belongs to the peptidase S54 family.

It is found in the membrane. Probable rhomboid-type serine protease that catalyzes intramembrane proteolysis. This is Rhomboid-like protein 19 from Arabidopsis thaliana (Mouse-ear cress).